The primary structure comprises 256 residues: 1-(5-phosphoribosyl)-5-[(5-phosphoribosylamino)methylideneamino] imidazole-4-carboxamide isomerase (256 aa).

Residue Asp-8 is the Proton acceptor of the active site. Asp-130 serves as the catalytic Proton donor.

This sequence belongs to the HisA/HisF family.

Its subcellular location is the cytoplasm. The enzyme catalyses 1-(5-phospho-beta-D-ribosyl)-5-[(5-phospho-beta-D-ribosylamino)methylideneamino]imidazole-4-carboxamide = 5-[(5-phospho-1-deoxy-D-ribulos-1-ylimino)methylamino]-1-(5-phospho-beta-D-ribosyl)imidazole-4-carboxamide. It participates in amino-acid biosynthesis; L-histidine biosynthesis; L-histidine from 5-phospho-alpha-D-ribose 1-diphosphate: step 4/9. The protein is 1-(5-phosphoribosyl)-5-[(5-phosphoribosylamino)methylideneamino] imidazole-4-carboxamide isomerase of Chlorobium phaeobacteroides (strain DSM 266 / SMG 266 / 2430).